We begin with the raw amino-acid sequence, 215 residues long: Deoxyribose-phosphate aldolase (215 aa).

The active-site Proton donor/acceptor is the D90. The active-site Schiff-base intermediate with acetaldehyde is K152. The active-site Proton donor/acceptor is K181.

Belongs to the DeoC/FbaB aldolase family. DeoC type 1 subfamily.

The protein resides in the cytoplasm. It catalyses the reaction 2-deoxy-D-ribose 5-phosphate = D-glyceraldehyde 3-phosphate + acetaldehyde. It participates in carbohydrate degradation; 2-deoxy-D-ribose 1-phosphate degradation; D-glyceraldehyde 3-phosphate and acetaldehyde from 2-deoxy-alpha-D-ribose 1-phosphate: step 2/2. Its function is as follows. Catalyzes a reversible aldol reaction between acetaldehyde and D-glyceraldehyde 3-phosphate to generate 2-deoxy-D-ribose 5-phosphate. This is Deoxyribose-phosphate aldolase from Ureaplasma parvum serovar 3 (strain ATCC 27815 / 27 / NCTC 11736).